The sequence spans 1386 residues: Lysophospholipase NTE1 (1386 aa).

Topologically, residues 1 to 19 (MGPEFEDSIPLVHSDNRTT) are cytoplasmic. A helical transmembrane segment spans residues 20–40 (TIYSVYIIISDIFSFVQWLLF). Topologically, residues 41–65 (KVLNLIIIDSPAFVLRLLSKNFEIN) are lumenal. The helical transmembrane segment at 66–86 (LHLSSILATLIGVSVVTYLVI) threads the bilayer. Residues 87 to 1386 (RYKFLTGYSH…KKILYRRNSI (1300 aa)) lie on the Cytoplasmic side of the membrane. The interval 394–416 (EAEAENLPKKLKHHHRNQLQRTT) is disordered. The segment covering 402 to 411 (KKLKHHHRNQ) has biased composition (basic residues). A nucleoside 3',5'-cyclic phosphate contacts are provided by residues 577-701 (KRLL…LKNL) and 697-821 (KLKN…VASK). In terms of domain architecture, PNPLA spans 1081–1245 (LVLGGGGSRG…LDNLPVNEMK (165 aa)). A GXGXXG motif is present at residues 1085-1090 (GGGSRG). The GXSXG signature appears at 1112 to 1116 (GTSIG). The Nucleophile role is filled by serine 1114. The active-site Proton acceptor is the aspartate 1232. The DGA/G motif lies at 1232-1234 (DGG).

It belongs to the NTE family.

The protein resides in the endoplasmic reticulum membrane. The enzyme catalyses a 1-acyl-sn-glycero-3-phosphocholine + H2O = sn-glycerol 3-phosphocholine + a fatty acid + H(+). Inhibited by organophosphorus esters. Intracellular phospholipase B that catalyzes the double deacylation of phosphatidylcholine (PC) to glycerophosphocholine (GroPCho). Plays an important role in membrane lipid homeostasis. Responsible for the rapid PC turnover in response to inositol, elevated temperatures, or when choline is present in the growth medium. The protein is Lysophospholipase NTE1 (NTE1) of Candida albicans (strain SC5314 / ATCC MYA-2876) (Yeast).